The chain runs to 308 residues: Oxygen-dependent coproporphyrinogen-III oxidase (308 aa).

Substrate is bound at residue Ser100. A divalent metal cation-binding residues include His104 and His114. Residue His114 is the Proton donor of the active site. 116-118 (NFR) contacts substrate. 2 residues coordinate a divalent metal cation: His153 and His183. Residues 248-283 (YVEFNLVFDRGTIFGLQSGGRTESILSSMPPMATWK) form an important for dimerization region. 266 to 268 (GGR) serves as a coordination point for substrate.

This sequence belongs to the aerobic coproporphyrinogen-III oxidase family. As to quaternary structure, homodimer. Requires a divalent metal cation as cofactor.

It localises to the cytoplasm. It catalyses the reaction coproporphyrinogen III + O2 + 2 H(+) = protoporphyrinogen IX + 2 CO2 + 2 H2O. It functions in the pathway porphyrin-containing compound metabolism; protoporphyrin-IX biosynthesis; protoporphyrinogen-IX from coproporphyrinogen-III (O2 route): step 1/1. Its function is as follows. Involved in the heme biosynthesis. Catalyzes the aerobic oxidative decarboxylation of propionate groups of rings A and B of coproporphyrinogen-III to yield the vinyl groups in protoporphyrinogen-IX. The sequence is that of Oxygen-dependent coproporphyrinogen-III oxidase from Francisella philomiragia subsp. philomiragia (strain ATCC 25017 / CCUG 19701 / FSC 153 / O#319-036).